Reading from the N-terminus, the 159-residue chain is MNQVRKADPNNKTVAENRKARFSYEVLDTIEAGLVLTGTEVKSLRQGQANIQDSYASVEGGEIWLINSYLPEYLQANRFNHEPRRRRKLLLNKREMAKLSQSVDREGMTLVPLKIYFNDQGRAKLLLAVGRGKKLHDKRETEKQRDWSREKGRLLKERG.

Residues 137-159 are disordered; sequence DKRETEKQRDWSREKGRLLKERG.

This sequence belongs to the SmpB family.

It is found in the cytoplasm. Its function is as follows. Required for rescue of stalled ribosomes mediated by trans-translation. Binds to transfer-messenger RNA (tmRNA), required for stable association of tmRNA with ribosomes. tmRNA and SmpB together mimic tRNA shape, replacing the anticodon stem-loop with SmpB. tmRNA is encoded by the ssrA gene; the 2 termini fold to resemble tRNA(Ala) and it encodes a 'tag peptide', a short internal open reading frame. During trans-translation Ala-aminoacylated tmRNA acts like a tRNA, entering the A-site of stalled ribosomes, displacing the stalled mRNA. The ribosome then switches to translate the ORF on the tmRNA; the nascent peptide is terminated with the 'tag peptide' encoded by the tmRNA and targeted for degradation. The ribosome is freed to recommence translation, which seems to be the essential function of trans-translation. The sequence is that of SsrA-binding protein from Mesorhizobium japonicum (strain LMG 29417 / CECT 9101 / MAFF 303099) (Mesorhizobium loti (strain MAFF 303099)).